The sequence spans 254 residues: Hydroxyacylglutathione hydrolase (254 aa).

Zn(2+)-binding residues include His54, His56, Asp58, His59, His111, Asp130, and His168.

Belongs to the metallo-beta-lactamase superfamily. Glyoxalase II family. Monomer. Zn(2+) serves as cofactor.

It catalyses the reaction an S-(2-hydroxyacyl)glutathione + H2O = a 2-hydroxy carboxylate + glutathione + H(+). The protein operates within secondary metabolite metabolism; methylglyoxal degradation; (R)-lactate from methylglyoxal: step 2/2. Functionally, thiolesterase that catalyzes the hydrolysis of S-D-lactoyl-glutathione to form glutathione and D-lactic acid. The chain is Hydroxyacylglutathione hydrolase from Legionella pneumophila (strain Lens).